We begin with the raw amino-acid sequence, 399 residues long: MAREKFERNKPHVNIGTIGHVDHGKTTLTAAITNVLAKKGQAEKQDYADIDGAPEERERGITINTAHVEYETDTRHYAHVDCPGHADYVKNMITGAAQMDGAILVCAATDGPMAQTKEHILLAKQVGVPALVVALNKCDMVDDEEIIELVEMEVRELLDSYDFPGDDIPVVQVSGLKALEGEAEWEAKIEELMAAVDEAIPEPEREVDKPFLMAVEDVFSITGRGTVATGRIERGKVKVGEEIEIVGIKDARKTTVTGVEMFRKLLEEGMAGDNCGLLLRGIQKEDIERGMVLVKPGSITPHTKFEGEVYVLKKEEGGRHTPFFAGYRPQFYIRTTDVTGQITAFTADDGSAVEMVMPGDRIKMTGELICPVAMENGMRFAIREGGRTIGAGVVSKIIE.

The 195-residue stretch at 10 to 204 (KPHVNIGTIG…AVDEAIPEPE (195 aa)) folds into the tr-type G domain. Positions 19–26 (GHVDHGKT) are G1. 19–26 (GHVDHGKT) contributes to the GTP binding site. Thr-26 contacts Mg(2+). The segment at 60-64 (GITIN) is G2. The segment at 81-84 (DCPG) is G3. Residues 81-85 (DCPGH) and 136-139 (NKCD) contribute to the GTP site. The interval 136–139 (NKCD) is G4. Positions 174–176 (SGL) are G5.

This sequence belongs to the TRAFAC class translation factor GTPase superfamily. Classic translation factor GTPase family. EF-Tu/EF-1A subfamily. As to quaternary structure, monomer.

It is found in the cytoplasm. It catalyses the reaction GTP + H2O = GDP + phosphate + H(+). In terms of biological role, GTP hydrolase that promotes the GTP-dependent binding of aminoacyl-tRNA to the A-site of ribosomes during protein biosynthesis. In Parasynechococcus marenigrum (strain WH8102), this protein is Elongation factor Tu.